The following is a 246-amino-acid chain: Ribonuclease 3 (246 aa).

In terms of domain architecture, RNase III spans 16–144 (LLEFQKQAGL…VIGAYYIDSG (129 aa)). E57 lines the Mg(2+) pocket. The active site involves D61. Mg(2+) contacts are provided by D130 and E133. E133 is a catalytic residue. Residues 171–240 (DYKSLLQELV…AKVAYENLCS (70 aa)) enclose the DRBM domain.

The protein belongs to the ribonuclease III family. In terms of assembly, homodimer. Mg(2+) serves as cofactor.

It localises to the cytoplasm. The catalysed reaction is Endonucleolytic cleavage to 5'-phosphomonoester.. Functionally, digests double-stranded RNA. Involved in the processing of primary rRNA transcript to yield the immediate precursors to the large and small rRNAs (23S and 16S). Processes some mRNAs, and tRNAs when they are encoded in the rRNA operon. Processes pre-crRNA and tracrRNA of type II CRISPR loci if present in the organism. The chain is Ribonuclease 3 from Treponema denticola (strain ATCC 35405 / DSM 14222 / CIP 103919 / JCM 8153 / KCTC 15104).